The chain runs to 694 residues: MNDPRSKMMISPGLLPTESLLDSLILISNEVSSMQKFPLVQIKNVSSMIRRIKLLSSLFEEIQESDSPLPPSSILCFIEIFSVITRVKVLIQECTDGSSLWSLIQLDFISNQFFVLVKEMGRALDILPLNLLNVAQDIKEQVDLLHKQSKRVELELFIDPREVQRRENLFEVMSKNCLQNKKTNNNKGFIDFVKVEEIMCSIGLRTLSDYVEEISKLEVEAQNQAGTGGLIVVSNINNLMSLVSYTKSMVFRNDGESEECKPISMFLYNKSKIHDNDSSSSSSFSQSMMTVNIPDEFRCPISLDLMRDPVIVSSGHTYDRISIAEWINSGHHTCPKSGQRLIHTALIPNYALKSLVHQWCYENNVKMNEAITKNNNSSSKRHKNENAIDHISENKASKDAVKMTAEFLVGKLATGSTDIQRQSAYEIRLLAKTGMDNRRIIAEVGAIPFLVTLLVSKDSRIQEHVVTALFNLSIYDNNKILIMAAGAIDNIVEVLEFGKTMEARENAAAAIYSLSMIDDCKVQIGASSRAIPALVGLLKEGTIIGKRDAATALFNLAVYNPNKLSIVKSGAVTLLVELLMDDKAGITDDSLAVLAVLLGCSEGLEEIKNSKSLVPLLIDLLRFGSVKGKENSITLLLGLCKEEGELVAMRLLANPRSIPSLQSLAADGSLRARRKADALLRLLNRCCSQPHHSL.

The U-box domain occupies 292–366 (NIPDEFRCPI…HQWCYENNVK (75 aa)). 7 ARM repeats span residues 392–432 (SENK…LLAK), 435–474 (MDNR…NLSI), 476–516 (DNNK…SLSM), 519–558 (DCKV…NLAV), 560–599 (NPNK…VLLG), 601–641 (SEGL…GLCK), and 646–685 (LVAM…LLNR).

As to quaternary structure, interacts with LYK3. Binds to NORK/DMI2. In terms of processing, phosphorylated by LYK3 in vitro. Phosphorylated by NORK/DMI2. Present ubiquitously at very low levels during nonsymbiotic growth. Accumulates in roots and nodules during symbiotic growth with rhizobia and mycorrhiza.

The protein localises to the cell membrane. The catalysed reaction is S-ubiquitinyl-[E2 ubiquitin-conjugating enzyme]-L-cysteine + [acceptor protein]-L-lysine = [E2 ubiquitin-conjugating enzyme]-L-cysteine + N(6)-ubiquitinyl-[acceptor protein]-L-lysine.. The protein operates within protein modification; protein ubiquitination. Exhibits U-box-dependent E3 ubiquitin ligase activity in vitro. Negatively modulates successive stages of infection and development of rhizobial (e.g. Sinorhizobium meliloti) and arbuscular mycorrhizal fungi (AM, e.g. Rhizophagus irregularis) symbioses, in an ubiquitin ligase activity-dependent manner. Negative regulator of the LYK3 signaling pathway leading to nitrogen-fixing symbiosis (e.g. infection and nodulation) by rhizobia. May be involved in the discrimination of rhizobium strains producing variant Nod factors. The sequence is that of U-box domain-containing protein 1 from Medicago truncatula (Barrel medic).